Reading from the N-terminus, the 388-residue chain is Succinate--CoA ligase [ADP-forming] subunit beta (388 aa).

The region spanning 9-244 is the ATP-grasp domain; the sequence is KQLFAEYGLP…PSQDDPREAH (236 aa). Residues lysine 46, 53-55, glutamate 99, threonine 102, and glutamate 107 each bind ATP; that span reads GRG. Mg(2+)-binding residues include asparagine 199 and aspartate 213. Substrate is bound by residues asparagine 264 and 321 to 323; that span reads GIV.

The protein belongs to the succinate/malate CoA ligase beta subunit family. Heterotetramer of two alpha and two beta subunits. The cofactor is Mg(2+).

It carries out the reaction succinate + ATP + CoA = succinyl-CoA + ADP + phosphate. The catalysed reaction is GTP + succinate + CoA = succinyl-CoA + GDP + phosphate. It participates in carbohydrate metabolism; tricarboxylic acid cycle; succinate from succinyl-CoA (ligase route): step 1/1. Functionally, succinyl-CoA synthetase functions in the citric acid cycle (TCA), coupling the hydrolysis of succinyl-CoA to the synthesis of either ATP or GTP and thus represents the only step of substrate-level phosphorylation in the TCA. The beta subunit provides nucleotide specificity of the enzyme and binds the substrate succinate, while the binding sites for coenzyme A and phosphate are found in the alpha subunit. This Stutzerimonas stutzeri (strain A1501) (Pseudomonas stutzeri) protein is Succinate--CoA ligase [ADP-forming] subunit beta.